Consider the following 174-residue polypeptide: MNYFELFSLLPSYDVDTALLAERYRELQRAVHPDKFANASEQDKRLSVQRTAQINDAFQTLKNPIQRAEHLLTLKGLELSHESTTLKDTQFLMQQMEWRESLEEIKHSDDPDSEIAELYDSFEQYARQITTELKPLLVSELEADHLQAAEQIRKLKFMAKLQDELTRVEDALFD.

The J domain occupies 2 to 74; it reads NYFELFSLLP…IQRAEHLLTL (73 aa).

This sequence belongs to the HscB family. Interacts with HscA and stimulates its ATPase activity.

Co-chaperone involved in the maturation of iron-sulfur cluster-containing proteins. Seems to help targeting proteins to be folded toward HscA. This is Co-chaperone protein HscB homolog from Shewanella halifaxensis (strain HAW-EB4).